A 334-amino-acid chain; its full sequence is Cytoskeleton protein RodZ (334 aa).

Over 1–111 the chain is Cytoplasmic; it reads MNTEATHDQN…LGKRRKKRDG (111 aa). In terms of domain architecture, HTH cro/C1-type spans 19–71; it reads LRNAREQLGLSQQAVAERLCLKVSTVRDIEEDKAPSDLASTFLRGYIRSYARL. Residues 30 to 49 constitute a DNA-binding region (H-T-H motif); that stretch reads QQAVAERLCLKVSTVRDIEE. A helical; Signal-anchor for type II membrane protein membrane pass occupies residues 112–132; it reads WLMSFTWLVLFVVVGLTGAWW. Topologically, residues 133–334 are periplasmic; sequence WQNHKAQQEE…TLNAEPTPAQ (202 aa). Positions 155-241 are disordered; the sequence is NADKDSGQSV…PSALPTSQAG (87 aa). Polar residues predominate over residues 161–175; it reads GQSVPLDTGAVTSQD. Low complexity-rich tracts occupy residues 176–211 and 219–241; these read TTPA…TVVA and TAAT…SQAG.

Belongs to the RodZ family.

Its subcellular location is the cell inner membrane. Functionally, cytoskeletal protein that is involved in cell-shape control through regulation of the length of the long axis. This Salmonella dublin (strain CT_02021853) protein is Cytoskeleton protein RodZ.